A 627-amino-acid polypeptide reads, in one-letter code: Mitochondrial Rho GTPase 1 (627 aa).

Residues 1-169 (MATVRICVCG…FFLCQKAVTH (169 aa)) form the Miro 1 domain. Residues 1–599 (MATVRICVCG…PRSNEEGPDR (599 aa)) are Cytoplasmic-facing. GTP is bound by residues 10–17 (GDESTGKS), 58–62 (DTSAR), and 114–117 (NKSD). 2 EF-hand domains span residues 185-220 (LCIN…CFDK) and 305-340 (AGYR…APGL). Residues Asp-198, Asp-200, Asp-202, Tyr-204, Glu-209, Asp-318, Asp-320, Asp-322, and Glu-329 each coordinate Ca(2+). The region spanning 420-584 (RNVVLCYVLG…FVAYADAATT (165 aa)) is the Miro 2 domain. GTP is bound by residues 429 to 436 (GASGAGKS), 465 to 469 (ELPGG), and 534 to 537 (LKAD). The chain crosses the membrane as a helical; Anchor for type IV membrane protein span at residues 600-620 (TSLYIALGATACAGVAALTIW). Residues 621–627 (RRATNAL) are Mitochondrial intermembrane-facing.

The protein belongs to the mitochondrial Rho GTPase family.

It localises to the mitochondrion outer membrane. Functionally, mitochondrial GTPase involved in mitochondrial trafficking. Probably involved in control of anterograde transport of mitochondria and their subcellular distribution. This is Mitochondrial Rho GTPase 1 (GEM1) from Gibberella zeae (strain ATCC MYA-4620 / CBS 123657 / FGSC 9075 / NRRL 31084 / PH-1) (Wheat head blight fungus).